Consider the following 388-residue polypeptide: Glutamine transporter 2 (388 aa).

11 helical membrane passes run 5–27 (LFGSALILSGTALGAGMLAIPMV), 31–53 (FGLFYSTLLMLIICAGTTYAALL), 86–106 (LFYLLLFCMLIAYILGAADLI), 121–141 (FAQVAFTLFASAFVVCGTQII), 147–167 (LLFFFMISMLVLTLIILIPGM), 186–206 (TSTILFTSFASMPVIPSLVAY), 218–238 (MVILGSIIPLICYLVWLYAVV), 268–288 (IILSIFTSLALLTSFLGVAMA), 302–322 (IVTYVCTFILPLLGAGLAADQ), 326–346 (VLGYAGVILVFLAIFIPLAMV), and 368–388 (GGKLALGLTLLFGLLLLISQI).

This sequence belongs to the amino acid/polyamine transporter 2 family.

It localises to the cell inner membrane. In terms of biological role, seems to be involved in glutamine transport. Complements an E.coli glnP deletion mutant. The chain is Glutamine transporter 2 from Aliivibrio fischeri (strain ATCC 700601 / ES114) (Vibrio fischeri).